A 56-amino-acid chain; its full sequence is uncharacterized protein (56 aa).

The next 2 membrane-spanning stretches (helical) occupy residues 5–23 (VLIF…YWIY) and 33–55 (ITAG…ILGW).

Its subcellular location is the cell membrane. This is an uncharacterized protein from Archaeoglobus fulgidus (strain ATCC 49558 / DSM 4304 / JCM 9628 / NBRC 100126 / VC-16).